The sequence spans 303 residues: UDP-3-O-acyl-N-acetylglucosamine deacetylase (303 aa).

Zn(2+) is bound by residues histidine 78, histidine 237, and aspartate 241. Histidine 264 serves as the catalytic Proton donor.

This sequence belongs to the LpxC family. The cofactor is Zn(2+).

The enzyme catalyses a UDP-3-O-[(3R)-3-hydroxyacyl]-N-acetyl-alpha-D-glucosamine + H2O = a UDP-3-O-[(3R)-3-hydroxyacyl]-alpha-D-glucosamine + acetate. Its pathway is glycolipid biosynthesis; lipid IV(A) biosynthesis; lipid IV(A) from (3R)-3-hydroxytetradecanoyl-[acyl-carrier-protein] and UDP-N-acetyl-alpha-D-glucosamine: step 2/6. Its function is as follows. Catalyzes the hydrolysis of UDP-3-O-myristoyl-N-acetylglucosamine to form UDP-3-O-myristoylglucosamine and acetate, the committed step in lipid A biosynthesis. In Azotobacter vinelandii (strain DJ / ATCC BAA-1303), this protein is UDP-3-O-acyl-N-acetylglucosamine deacetylase.